Here is a 596-residue protein sequence, read N- to C-terminus: Isocitrate dehydrogenase kinase/phosphatase (596 aa).

Residues Ala-316 to Met-322 and Lys-337 each bind ATP. Asp-372 is a catalytic residue.

It belongs to the AceK family.

The protein localises to the cytoplasm. The enzyme catalyses L-seryl-[isocitrate dehydrogenase] + ATP = O-phospho-L-seryl-[isocitrate dehydrogenase] + ADP + H(+). In terms of biological role, bifunctional enzyme which can phosphorylate or dephosphorylate isocitrate dehydrogenase (IDH) on a specific serine residue. This is a regulatory mechanism which enables bacteria to bypass the Krebs cycle via the glyoxylate shunt in response to the source of carbon. When bacteria are grown on glucose, IDH is fully active and unphosphorylated, but when grown on acetate or ethanol, the activity of IDH declines drastically concomitant with its phosphorylation. The protein is Isocitrate dehydrogenase kinase/phosphatase of Cronobacter sakazakii (strain ATCC BAA-894) (Enterobacter sakazakii).